A 370-amino-acid polypeptide reads, in one-letter code: Aminomethyltransferase (370 aa).

The protein belongs to the GcvT family. The glycine cleavage system is composed of four proteins: P, T, L and H.

The catalysed reaction is N(6)-[(R)-S(8)-aminomethyldihydrolipoyl]-L-lysyl-[protein] + (6S)-5,6,7,8-tetrahydrofolate = N(6)-[(R)-dihydrolipoyl]-L-lysyl-[protein] + (6R)-5,10-methylene-5,6,7,8-tetrahydrofolate + NH4(+). Its function is as follows. The glycine cleavage system catalyzes the degradation of glycine. This Leptospira biflexa serovar Patoc (strain Patoc 1 / Ames) protein is Aminomethyltransferase.